A 205-amino-acid polypeptide reads, in one-letter code: Holliday junction resolvase RecU (205 aa).

Residues 1–22 form a disordered region; the sequence is MAINYPAGTRRRTAQAKNTMRT. Mg(2+)-binding residues include Thr-90, Asp-92, Asp-105, and Gln-124.

It belongs to the RecU family. Requires Mg(2+) as cofactor.

It is found in the cytoplasm. It carries out the reaction Endonucleolytic cleavage at a junction such as a reciprocal single-stranded crossover between two homologous DNA duplexes (Holliday junction).. Functionally, endonuclease that resolves Holliday junction intermediates in genetic recombination. Cleaves mobile four-strand junctions by introducing symmetrical nicks in paired strands. Promotes annealing of linear ssDNA with homologous dsDNA. Required for DNA repair, homologous recombination and chromosome segregation. The polypeptide is Holliday junction resolvase RecU (Leuconostoc citreum (strain KM20)).